The primary structure comprises 473 residues: MKILYSLRRFYHVETLFNGTFVLAGRDQETTGFAWWAGNARLINLSGKLLGAHVAHAGLIVFWAGAMNLFEVAHFVPEKPMYEQGLILLPHLATLGWGVGPGGEVLDTFPYFVSGVLHLISSAVLGFGGIYHALLGPETLEESFPFFGYVWKDRNKMTTILGIHLILLGLGSFLLVLKALYFGGVYDTWAPGGGDVRKITNLTLSPSVIFGYLLKSPFGGEGWIVSVDDLEDIIGGHVWLGFICVFGGIWHILTKPFAWARRAFVWSGEAYLSYSLAALSVFGFIACCFVWFNNTAYPSEFYGPTGPEASQAQAFTFLVRDQRLGANVGSAQGPTGLGKYLMRSPTGEVIFGGETMRFWDLRAPWLEPLRGPNGLDLNRLKKDIQPWQERRSAEYMTHAPLGSLNSVGGVATEINAVNYVSPRSWLSTSHFVLGFFFFVGHLWHAGRARAAAAGFEKGIDRDLEPVLYMNPLN.

The propeptide occupies 1–14 (MKILYSLRRFYHVE). Thr15 is subject to N-acetylthreonine. Thr15 is modified (phosphothreonine). Helical transmembrane passes span 69-93 (LFEV…PHLA), 134-155 (LLGP…KDRN), 178-200 (KALY…RKIT), 255-275 (KPFA…LSYS), and 291-312 (WFNN…ASQA). Position 367 (Glu367) interacts with [CaMn4O5] cluster. The chain crosses the membrane as a helical span at residues 447–471 (RARAAAAGFEKGIDRDLEPVLYMNP).

It belongs to the PsbB/PsbC family. PsbC subfamily. In terms of assembly, PSII is composed of 1 copy each of membrane proteins PsbA, PsbB, PsbC, PsbD, PsbE, PsbF, PsbH, PsbI, PsbJ, PsbK, PsbL, PsbM, PsbT, PsbX, PsbY, PsbZ, Psb30/Ycf12, at least 3 peripheral proteins of the oxygen-evolving complex and a large number of cofactors. It forms dimeric complexes. It depends on Binds multiple chlorophylls and provides some of the ligands for the Ca-4Mn-5O cluster of the oxygen-evolving complex. It may also provide a ligand for a Cl- that is required for oxygen evolution. PSII binds additional chlorophylls, carotenoids and specific lipids. as a cofactor.

Its subcellular location is the plastid. It localises to the chloroplast thylakoid membrane. Functionally, one of the components of the core complex of photosystem II (PSII). It binds chlorophyll and helps catalyze the primary light-induced photochemical processes of PSII. PSII is a light-driven water:plastoquinone oxidoreductase, using light energy to abstract electrons from H(2)O, generating O(2) and a proton gradient subsequently used for ATP formation. The protein is Photosystem II CP43 reaction center protein of Lolium perenne (Perennial ryegrass).